The following is a 215-amino-acid chain: Enolase-phosphatase E1 (215 aa).

Residues aspartate 11 and glutamate 13 each contribute to the Mg(2+) site. Substrate is bound by residues 117–118 (SS) and lysine 151. Aspartate 174 is a Mg(2+) binding site.

This sequence belongs to the HAD-like hydrolase superfamily. MasA/MtnC family. In terms of assembly, monomer. Requires Mg(2+) as cofactor.

The protein localises to the cytoplasm. It localises to the nucleus. It carries out the reaction 5-methylsulfanyl-2,3-dioxopentyl phosphate + H2O = 1,2-dihydroxy-5-(methylsulfanyl)pent-1-en-3-one + phosphate. Its pathway is amino-acid biosynthesis; L-methionine biosynthesis via salvage pathway; L-methionine from S-methyl-5-thio-alpha-D-ribose 1-phosphate: step 3/6. It participates in amino-acid biosynthesis; L-methionine biosynthesis via salvage pathway; L-methionine from S-methyl-5-thio-alpha-D-ribose 1-phosphate: step 4/6. Functionally, bifunctional enzyme that catalyzes the enolization of 2,3-diketo-5-methylthiopentyl-1-phosphate (DK-MTP-1-P) into the intermediate 2-hydroxy-3-keto-5-methylthiopentenyl-1-phosphate (HK-MTPenyl-1-P), which is then dephosphorylated to form the acireductone 1,2-dihydroxy-3-keto-5-methylthiopentene (DHK-MTPene). The sequence is that of Enolase-phosphatase E1 (utr4) from Schizosaccharomyces japonicus (strain yFS275 / FY16936) (Fission yeast).